The primary structure comprises 481 residues: 3-isopropylmalate dehydratase large subunit (481 aa).

Positions 357, 417, and 420 each coordinate [4Fe-4S] cluster.

This sequence belongs to the aconitase/IPM isomerase family. LeuC type 1 subfamily. In terms of assembly, heterodimer of LeuC and LeuD. [4Fe-4S] cluster is required as a cofactor.

The catalysed reaction is (2R,3S)-3-isopropylmalate = (2S)-2-isopropylmalate. It participates in amino-acid biosynthesis; L-leucine biosynthesis; L-leucine from 3-methyl-2-oxobutanoate: step 2/4. Catalyzes the isomerization between 2-isopropylmalate and 3-isopropylmalate, via the formation of 2-isopropylmaleate. The polypeptide is 3-isopropylmalate dehydratase large subunit (Mycolicibacterium gilvum (strain PYR-GCK) (Mycobacterium gilvum (strain PYR-GCK))).